We begin with the raw amino-acid sequence, 519 residues long: Phosphate acetyltransferase (519 aa).

The tract at residues 196 to 519 is phosphate acetyltransferase; the sequence is AFQRSLEKKA…LISAIQAQDY (324 aa).

It in the N-terminal section; belongs to the CobB/CobQ family. In the C-terminal section; belongs to the phosphate acetyltransferase and butyryltransferase family.

The protein localises to the cytoplasm. The catalysed reaction is acetyl-CoA + phosphate = acetyl phosphate + CoA. Its pathway is metabolic intermediate biosynthesis; acetyl-CoA biosynthesis; acetyl-CoA from acetate: step 2/2. The sequence is that of Phosphate acetyltransferase (pta) from Helicobacter pylori (strain J99 / ATCC 700824) (Campylobacter pylori J99).